Reading from the N-terminus, the 355-residue chain is Hyaluronan and proteoglycan link protein 1 (355 aa).

Residues 1-9 (MTSLLFLVL) constitute a propeptide that is removed on maturation. N-linked (GlcNAc...) asparagine glycans are attached at residues Asn-21 and Asn-56. In terms of domain architecture, Ig-like V-type spans 38 to 156 (PRLLVVAEQA…EDDTAVVALN (119 aa)). Disulfide bonds link Cys-61–Cys-140, Cys-182–Cys-253, Cys-206–Cys-227, Cys-280–Cys-350, and Cys-305–Cys-326. 2 consecutive Link domains span residues 160–255 (VVFP…FCFT) and 260–352 (GRFY…YCFR).

This sequence belongs to the HAPLN family.

The protein resides in the secreted. Its subcellular location is the extracellular space. It is found in the extracellular matrix. Its function is as follows. Stabilizes the aggregates of proteoglycan monomers with hyaluronic acid in the extracellular cartilage matrix. This Gallus gallus (Chicken) protein is Hyaluronan and proteoglycan link protein 1 (HAPLN1).